We begin with the raw amino-acid sequence, 448 residues long: Trigger factor (448 aa).

The region spanning 163–248 (GDIVVIDFDG…VKDIRVPKAA (86 aa)) is the PPIase FKBP-type domain.

This sequence belongs to the FKBP-type PPIase family. Tig subfamily.

It is found in the cytoplasm. It catalyses the reaction [protein]-peptidylproline (omega=180) = [protein]-peptidylproline (omega=0). In terms of biological role, involved in protein export. Acts as a chaperone by maintaining the newly synthesized protein in an open conformation. Functions as a peptidyl-prolyl cis-trans isomerase. This is Trigger factor from Rhodospirillum centenum (strain ATCC 51521 / SW).